The sequence spans 355 residues: Elongation factor Ts (355 aa).

The interval T82–V85 is involved in Mg(2+) ion dislocation from EF-Tu.

This sequence belongs to the EF-Ts family.

The protein resides in the cytoplasm. Associates with the EF-Tu.GDP complex and induces the exchange of GDP to GTP. It remains bound to the aminoacyl-tRNA.EF-Tu.GTP complex up to the GTP hydrolysis stage on the ribosome. This is Elongation factor Ts from Helicobacter hepaticus (strain ATCC 51449 / 3B1).